We begin with the raw amino-acid sequence, 260 residues long: Acetylglutamate kinase (260 aa).

Residues 45-46 (GG), Arg-67, and Asn-159 each bind substrate.

The protein belongs to the acetylglutamate kinase family. ArgB subfamily.

The protein localises to the cytoplasm. It carries out the reaction N-acetyl-L-glutamate + ATP = N-acetyl-L-glutamyl 5-phosphate + ADP. It functions in the pathway amino-acid biosynthesis; L-arginine biosynthesis; N(2)-acetyl-L-ornithine from L-glutamate: step 2/4. Functionally, catalyzes the ATP-dependent phosphorylation of N-acetyl-L-glutamate. In Aliivibrio fischeri (strain ATCC 700601 / ES114) (Vibrio fischeri), this protein is Acetylglutamate kinase.